We begin with the raw amino-acid sequence, 165 residues long: Ribosome maturation factor RimM (165 aa).

The region spanning 90–161 (EDEYFIVDLV…LITIRPSGEW (72 aa)) is the PRC barrel domain.

It belongs to the RimM family. Binds ribosomal protein uS19.

Its subcellular location is the cytoplasm. An accessory protein needed during the final step in the assembly of 30S ribosomal subunit, possibly for assembly of the head region. Essential for efficient processing of 16S rRNA. May be needed both before and after RbfA during the maturation of 16S rRNA. It has affinity for free ribosomal 30S subunits but not for 70S ribosomes. This is Ribosome maturation factor RimM from Clostridium perfringens (strain SM101 / Type A).